The sequence spans 583 residues: Secretogranin-2b (583 aa).

An N-terminal signal peptide occupies residues 1 to 28 (MMLSLPKLSAGGVVVLLATLLHTLTVQG). 2 disordered regions span residues 123-159 (AGESPESQAAGNERRLHKTRRPVADGESPAGDYAGFV) and 526-583 (VDNG…VAGM). Residues 534–546 (AKRDTQGKEEPEG) are compositionally biased toward basic and acidic residues.

The protein belongs to the chromogranin/secretogranin protein family.

Its subcellular location is the secreted. Functionally, neuroendocrine protein of the granin family that regulates the biogenesis of secretory granules. Required for neurovascular modeling of the hindbrain. Acts in a non-cell autonomous manner and is required for migration and proliferation of central artery endothelial cells. Required for normal courting behavior and spawning. This Danio rerio (Zebrafish) protein is Secretogranin-2b.